We begin with the raw amino-acid sequence, 494 residues long: Glutamate--tRNA ligase (494 aa).

The 'HIGH' region motif lies at 10–20; the sequence is PSPTGDPHVGT. The Zn(2+) site is built by C107, C109, C134, and H136. Positions 251–255 match the 'KMSKS' region motif; that stretch reads KLSKR. K254 lines the ATP pocket.

The protein belongs to the class-I aminoacyl-tRNA synthetase family. Glutamate--tRNA ligase type 1 subfamily. As to quaternary structure, monomer. Requires Zn(2+) as cofactor.

The protein resides in the cytoplasm. It carries out the reaction tRNA(Glu) + L-glutamate + ATP = L-glutamyl-tRNA(Glu) + AMP + diphosphate. In terms of biological role, catalyzes the attachment of glutamate to tRNA(Glu) in a two-step reaction: glutamate is first activated by ATP to form Glu-AMP and then transferred to the acceptor end of tRNA(Glu). The polypeptide is Glutamate--tRNA ligase (Pseudomonas aeruginosa (strain ATCC 15692 / DSM 22644 / CIP 104116 / JCM 14847 / LMG 12228 / 1C / PRS 101 / PAO1)).